The following is a 144-amino-acid chain: MQDVIFFLSKHILLISIWIFCFIAAVFFITRTLLSKSKMINNFQAIKLINQDKAIVVDTRSLESFKEGHILNSINVPLKNIFLGKIKEIEIYKMFPIILVLSDTYKVNACIKKFFEYGFNRVYILKNGLYYWKTDNLPLIVNDK.

Residues 50–140 (NQDKAIVVDT…YWKTDNLPLI (91 aa)) form the Rhodanese domain.

This is an uncharacterized protein from Buchnera aphidicola subsp. Acyrthosiphon pisum (strain APS) (Acyrthosiphon pisum symbiotic bacterium).